Reading from the N-terminus, the 254-residue chain is Alcohol dehydrogenase (254 aa).

Residue 10–33 coordinates NAD(+); sequence FVAGLGGIGLDTSRELVKRNLKNL. Substrate is bound at residue Ser138. The active-site Proton acceptor is Tyr151.

This sequence belongs to the short-chain dehydrogenases/reductases (SDR) family. In terms of assembly, homodimer.

The enzyme catalyses a primary alcohol + NAD(+) = an aldehyde + NADH + H(+). It catalyses the reaction a secondary alcohol + NAD(+) = a ketone + NADH + H(+). The sequence is that of Alcohol dehydrogenase (Adh) from Drosophila pseudoobscura pseudoobscura (Fruit fly).